We begin with the raw amino-acid sequence, 98 residues long: NADH-ubiquinone oxidoreductase chain 4L (98 aa).

3 helical membrane-spanning segments follow: residues 1 to 21 (MTLIHMNILMAFSMSLVGLLM), 29 to 49 (ALLCLEGMMLSLFVLATLTIL), and 61 to 81 (IILLVFAACEAAIGLALLVMV).

Belongs to the complex I subunit 4L family. As to quaternary structure, core subunit of respiratory chain NADH dehydrogenase (Complex I) which is composed of 45 different subunits.

Its subcellular location is the mitochondrion inner membrane. The enzyme catalyses a ubiquinone + NADH + 5 H(+)(in) = a ubiquinol + NAD(+) + 4 H(+)(out). Functionally, core subunit of the mitochondrial membrane respiratory chain NADH dehydrogenase (Complex I) which catalyzes electron transfer from NADH through the respiratory chain, using ubiquinone as an electron acceptor. Part of the enzyme membrane arm which is embedded in the lipid bilayer and involved in proton translocation. This Balaenoptera bonaerensis (Antarctic minke whale) protein is NADH-ubiquinone oxidoreductase chain 4L (MT-ND4L).